The following is a 383-amino-acid chain: Lipid-A-disaccharide synthase (383 aa).

It belongs to the LpxB family.

The catalysed reaction is a lipid X + a UDP-2-N,3-O-bis[(3R)-3-hydroxyacyl]-alpha-D-glucosamine = a lipid A disaccharide + UDP + H(+). It functions in the pathway bacterial outer membrane biogenesis; LPS lipid A biosynthesis. Functionally, condensation of UDP-2,3-diacylglucosamine and 2,3-diacylglucosamine-1-phosphate to form lipid A disaccharide, a precursor of lipid A, a phosphorylated glycolipid that anchors the lipopolysaccharide to the outer membrane of the cell. The protein is Lipid-A-disaccharide synthase of Myxococcus xanthus (strain DK1622).